A 556-amino-acid chain; its full sequence is Formate--tetrahydrofolate ligase (556 aa).

ATP is bound at residue 65–72; the sequence is TAAGEGKS.

Belongs to the formate--tetrahydrofolate ligase family.

It catalyses the reaction (6S)-5,6,7,8-tetrahydrofolate + formate + ATP = (6R)-10-formyltetrahydrofolate + ADP + phosphate. It functions in the pathway one-carbon metabolism; tetrahydrofolate interconversion. This chain is Formate--tetrahydrofolate ligase, found in Elusimicrobium minutum (strain Pei191).